A 595-amino-acid polypeptide reads, in one-letter code: Apolipoprotein N-acyltransferase 2 (595 aa).

Transmembrane regions (helical) follow at residues 30–50, 63–83, 95–115, 167–187, and 210–230; these read FLAF…FGFF, LFFH…HWII, VVAI…FPIF, AEIT…YTLF, and FITL…FLFK. Positions 241 to 555 constitute a CN hydrolase domain; sequence LNVLIVQPDA…AEALSETIDV (315 aa). The Proton acceptor role is filled by Glu-293. Lys-372 is an active-site residue. The active-site Nucleophile is Cys-463. The chain crosses the membrane as a helical span at residues 569-589; that stretch reads LIPWLMLFLTGIYYLNLLIGI.

The protein belongs to the CN hydrolase family. Apolipoprotein N-acyltransferase subfamily.

It is found in the cell inner membrane. It catalyses the reaction N-terminal S-1,2-diacyl-sn-glyceryl-L-cysteinyl-[lipoprotein] + a glycerophospholipid = N-acyl-S-1,2-diacyl-sn-glyceryl-L-cysteinyl-[lipoprotein] + a 2-acyl-sn-glycero-3-phospholipid + H(+). It functions in the pathway protein modification; lipoprotein biosynthesis (N-acyl transfer). Catalyzes the phospholipid dependent N-acylation of the N-terminal cysteine of apolipoprotein, the last step in lipoprotein maturation. This Leptospira interrogans serogroup Icterohaemorrhagiae serovar Lai (strain 56601) protein is Apolipoprotein N-acyltransferase 2.